We begin with the raw amino-acid sequence, 209 residues long: Uracil phosphoribosyltransferase (209 aa).

5-phospho-alpha-D-ribose 1-diphosphate contacts are provided by residues Arg79, Arg104, and 131 to 139; that span reads DPMLATGGS. Uracil contacts are provided by residues Ile194 and 199–201; that span reads GDA. Asp200 serves as a coordination point for 5-phospho-alpha-D-ribose 1-diphosphate.

This sequence belongs to the UPRTase family. It depends on Mg(2+) as a cofactor.

It catalyses the reaction UMP + diphosphate = 5-phospho-alpha-D-ribose 1-diphosphate + uracil. It participates in pyrimidine metabolism; UMP biosynthesis via salvage pathway; UMP from uracil: step 1/1. Allosterically activated by GTP. Its function is as follows. Catalyzes the conversion of uracil and 5-phospho-alpha-D-ribose 1-diphosphate (PRPP) to UMP and diphosphate. In Clostridium perfringens (strain ATCC 13124 / DSM 756 / JCM 1290 / NCIMB 6125 / NCTC 8237 / Type A), this protein is Uracil phosphoribosyltransferase.